The following is a 301-amino-acid chain: Phosphonates import ATP-binding protein PhnC (301 aa).

One can recognise an ABC transporter domain in the interval 8 to 256 (IRIERLSKTF…LLKTLYGDEA (249 aa)). 41-48 (GASGSGKS) provides a ligand contact to ATP. The disordered stretch occupies residues 264-287 (AQGPDDTESKNTADNTPLQDAAPA).

The protein belongs to the ABC transporter superfamily. Phosphonates importer (TC 3.A.1.9.1) family. As to quaternary structure, the complex is composed of two ATP-binding proteins (PhnC), two transmembrane proteins (PhnE) and a solute-binding protein (PhnD).

The protein localises to the cell inner membrane. It carries out the reaction phosphonate(out) + ATP + H2O = phosphonate(in) + ADP + phosphate + H(+). Part of the ABC transporter complex PhnCDE involved in phosphonates import. Responsible for energy coupling to the transport system. The sequence is that of Phosphonates import ATP-binding protein PhnC from Paraburkholderia xenovorans (strain LB400).